Consider the following 178-residue polypeptide: FXYD domain-containing ion transport regulator 5 (178 aa).

The signal sequence occupies residues 1–21 (MSLSSRLCLLTIVALILPSRG). Residues 21–59 (GQTPKKPTSIFTADQTSATTRDNVPDPDQTSPGVQTTPL) are compositionally biased toward polar residues. Residues 21 to 130 (GQTPKKPTSI…SYIEHPLDSN (110 aa)) form a disordered region. Residues 22–145 (QTPKKPTSIF…YYDDTTLRKR (124 aa)) are Extracellular-facing. The span at 67-79 (TGSQTAAQTETQQ) shows a compositional bias: low complexity. Residues 80-100 (LTKMATSNPVSDPGPHTSSKK) show a composition bias toward polar residues. The chain crosses the membrane as a helical span at residues 146-166 (GLLVAAVLFITGIIILTSGKC). The Cytoplasmic portion of the chain corresponds to 167–178 (RQLSQFCLNRHR).

The protein belongs to the FXYD family. As to quaternary structure, regulatory subunit of the sodium/potassium-transporting ATPase which is composed of a catalytic alpha subunit, a non-catalytic beta subunit and an additional regulatory subunit. The regulatory subunit, a member of the FXYD protein family, modulates the enzymatic activity in a tissue- and isoform-specific way by changing affinities of the Na+/K+-ATPase toward Na(+), K(+) or ATP. Post-translationally, glycosylated. In terms of tissue distribution, expressed mainly in epithelial tissue, such as lung, intestine and kidney. Not detected in brain, liver, muscle, and heart.

It is found in the cell membrane. The protein resides in the basolateral cell membrane. Functionally, associates with and regulates the activity of the sodium/potassium-transporting ATPase (NKA) which catalyzes the hydrolysis of ATP coupled with the exchange of Na(+) and K(+) ions across the plasma membrane. May increase NKA activity by increasing the apparent affinity for Na(+). Involved in down-regulation of E-cadherin which results in reduced cell adhesion. Promotes metastasis. The chain is FXYD domain-containing ion transport regulator 5 (Fxyd5) from Mus musculus (Mouse).